Consider the following 449-residue polypeptide: Phosphoglucosamine mutase (449 aa).

Ser-105 serves as the catalytic Phosphoserine intermediate. Mg(2+) is bound by residues Ser-105, Asp-242, Asp-244, and Asp-246. Ser-105 carries the phosphoserine modification.

This sequence belongs to the phosphohexose mutase family. Mg(2+) is required as a cofactor. Post-translationally, activated by phosphorylation.

The enzyme catalyses alpha-D-glucosamine 1-phosphate = D-glucosamine 6-phosphate. Its function is as follows. Catalyzes the conversion of glucosamine-6-phosphate to glucosamine-1-phosphate. This chain is Phosphoglucosamine mutase, found in Clavibacter sepedonicus (Clavibacter michiganensis subsp. sepedonicus).